A 1507-amino-acid polypeptide reads, in one-letter code: DE-cadherin (1507 aa).

Residues M1–A69 form the signal peptide. A propeptide spanning residues L70–R261 is cleaved from the precursor. Cadherin domains follow at residues V97 to F195, M204 to F301, L311 to Y412, I420 to F522, L532 to E633, I631 to L733, and W741 to A835. Topologically, residues P262–N1328 are extracellular. N-linked (GlcNAc...) asparagine glycans are attached at residues N317, N466, and N552. N-linked (GlcNAc...) asparagine glycosylation is found at N766, N949, N983, N999, and N1073. Residues V1084–C1123 form the EGF-like domain. 2 disulfide bridges follow: C1098/C1112 and C1114/C1123. Residues L1125 to C1313 enclose the Laminin G-like domain. N-linked (GlcNAc...) asparagine glycans are attached at residues N1145, N1274, and N1290. C1287 and C1313 form a disulfide bridge. Residues F1329–V1349 form a helical membrane-spanning segment. Over Q1350–I1507 the chain is Cytoplasmic. Residues Q1350–I1507 form an interaction with Inx2 region. A disordered region spans residues Y1488–I1507. S1493 carries the post-translational modification Phosphoserine.

As to quaternary structure, interacts (via cytoplasmic region) with Inx2 (via cytoplasmic loop). Interacts with Hakai. Interacts with Myo31DF. Post-translationally, N-glycosylation is important for biosynthesis and function. In terms of tissue distribution, in early stage 9 and stage 10 oocytes, expressed in border cells, strongly expressed in polar cells and very weakly expressed in the nurse cells (at protein level). In the embryo, expressed in the leading edge cells of the dorsal epidermis (at protein level). Stage 10 embryos exhibit intense expression in epithelial cells. Stage 14 embryos show expression in the hindgut (at the apical poles of cell-cell boundaries), at the apical junctions of tracheal cells and in the dorsal longitudinal trunk. In stage 16 embryos the glial midline cells of the central nervous system show strong expression.

Its subcellular location is the cell membrane. It is found in the apical cell membrane. Functionally, cadherins are calcium-dependent cell adhesion proteins. In connecting cells they preferentially interact with themselves in a homophilic manner; cadherins may thus contribute to the sorting of heterogeneous cell types. During oogenesis, integral component of the guidance mechanisms that regulate the directional persistent collective migration of the border cell (BC) cluster through the nurse cells to the oocyte. Functions downstream of the two chemoattractant receptors, Pvr and Egfr, to promote BC adhesion between the leader cells of the migrating cluster and the surrounding nurse cells. This adhesion increases Rac1 signaling in the leading cells, which in turn stabilizes DE-cadherin/DE-cadherin adhesions through the formation of forward-directed protrusions which attach/detach to the surrounding nurse cells in order to pull the cluster through the egg chamber to the oocyte. Within the BC cluster, also promotes adhesion between BCs, and between BCs and polar cells which enables the lead BC to communicate direction to the other cells in the cluster, providing polarity to each individual cell and ensuring collective behavior. May function in cell intercalation in the lateral epidermis during germband extension. Contributes to the determination of body left-right asymmetry by enhancing Myo31DF activity and inhibiting Myo61F activity. In Drosophila melanogaster (Fruit fly), this protein is DE-cadherin.